We begin with the raw amino-acid sequence, 413 residues long: Histidine--tRNA ligase (413 aa).

Belongs to the class-II aminoacyl-tRNA synthetase family.

The protein localises to the cytoplasm. It catalyses the reaction tRNA(His) + L-histidine + ATP = L-histidyl-tRNA(His) + AMP + diphosphate + H(+). The protein is Histidine--tRNA ligase of Methanosarcina acetivorans (strain ATCC 35395 / DSM 2834 / JCM 12185 / C2A).